The following is a 302-amino-acid chain: Endochitinase 4 (302 aa).

Residues 1-18 (EFTALSLLFSLLLLTASA) form the signal peptide. Positions 19–60 (EQCGKQAGGARCAAGLCCSNFGWCGNTNDYCGPGKCQSQCPS) constitute a Chitin-binding type-1 domain. 4 cysteine pairs are disulfide-bonded: cysteine 21–cysteine 36, cysteine 30–cysteine 42, cysteine 35–cysteine 49, and cysteine 54–cysteine 58. The segment at 59-79 (PSGPSPKPPTPGPGPSGGDIG) is disordered. Over residues 61–72 (GPSPKPPTPGPG) the composition is skewed to pro residues. Glutamate 144 serves as the catalytic Proton donor. Cysteine 162 and cysteine 182 are disulfide-bonded.

It belongs to the glycosyl hydrolase 19 family. Chitinase class I subfamily.

The protein resides in the vacuole. The enzyme catalyses Random endo-hydrolysis of N-acetyl-beta-D-glucosaminide (1-&gt;4)-beta-linkages in chitin and chitodextrins.. Its function is as follows. Defense against chitin-containing fungal pathogens. The protein is Endochitinase 4 (CHTB4) of Solanum tuberosum (Potato).